The sequence spans 113 residues: Putative hemolysin E-like protein (113 aa).

The protein belongs to the hemolysin E family.

In Shigella flexneri, this protein is Putative hemolysin E-like protein.